The primary structure comprises 293 residues: MTPTYHPYPGDNRPFLYAALQRREHLSLIRYRAEHAQDLAPLRAFLARIEAHATVIGARTRGDTLFILAASMPSDALRDEKHAYVRTISWEQAPQILETLERPPLPPYCPPVPTSCSSSRLIPDVPHNTRSHAQESSYTSRHALLTLLIEWRALMVEMDYSVRAHRVQRSSAPLHERHGTLPSDVLLFQTQGEVCALCAFQLQHVRAVGGQRHLIIHEAAGGGNIACERIFSLKEIDFATAKFTERIRRGLYQVAVHTAHADFTVNLIVPSLREQGGAYSLAESSAFHRRVSA.

This is an uncharacterized protein from Treponema pallidum (strain Nichols).